The following is a 138-amino-acid chain: Small ribosomal subunit protein uS11 (138 aa).

Over residues 1–12 the composition is skewed to low complexity; the sequence is MAQAKKGGTAAK. 2 disordered regions span residues 1-32 and 119-138; these read MAQAKKGGTAAKKGQKTRRREKKNVPHGAAHI and ISDVTPQPHNGCRPPKRRRV. Over residues 13-22 the composition is skewed to basic residues; that stretch reads KGQKTRRREK.

It belongs to the universal ribosomal protein uS11 family. As to quaternary structure, part of the 30S ribosomal subunit. Interacts with proteins S7 and S18. Binds to IF-3.

Functionally, located on the platform of the 30S subunit, it bridges several disparate RNA helices of the 16S rRNA. Forms part of the Shine-Dalgarno cleft in the 70S ribosome. In Mycolicibacterium smegmatis (strain ATCC 700084 / mc(2)155) (Mycobacterium smegmatis), this protein is Small ribosomal subunit protein uS11.